Here is a 428-residue protein sequence, read N- to C-terminus: Enolase (428 aa).

Glutamine 162 is a (2R)-2-phosphoglycerate binding site. Catalysis depends on glutamate 204, which acts as the Proton donor. The Mg(2+) site is built by aspartate 241, glutamate 282, and aspartate 309. (2R)-2-phosphoglycerate is bound by residues lysine 334, arginine 363, serine 364, and lysine 385. Lysine 334 acts as the Proton acceptor in catalysis.

The protein belongs to the enolase family. Mg(2+) serves as cofactor.

It localises to the cytoplasm. The protein resides in the secreted. It is found in the cell surface. It catalyses the reaction (2R)-2-phosphoglycerate = phosphoenolpyruvate + H2O. It functions in the pathway carbohydrate degradation; glycolysis; pyruvate from D-glyceraldehyde 3-phosphate: step 4/5. Catalyzes the reversible conversion of 2-phosphoglycerate (2-PG) into phosphoenolpyruvate (PEP). It is essential for the degradation of carbohydrates via glycolysis. This Mycobacterium marinum (strain ATCC BAA-535 / M) protein is Enolase.